The following is a 213-amino-acid chain: Uridine kinase (213 aa).

An ATP-binding site is contributed by 13 to 20 (GASASGKS).

Belongs to the uridine kinase family.

Its subcellular location is the cytoplasm. It catalyses the reaction uridine + ATP = UMP + ADP + H(+). It carries out the reaction cytidine + ATP = CMP + ADP + H(+). Its pathway is pyrimidine metabolism; CTP biosynthesis via salvage pathway; CTP from cytidine: step 1/3. It participates in pyrimidine metabolism; UMP biosynthesis via salvage pathway; UMP from uridine: step 1/1. This is Uridine kinase from Haemophilus influenzae (strain PittEE).